Here is a 109-residue protein sequence, read N- to C-terminus: MKRIKSGDEVIVIAGKSKGHIGKVLRVVDDAVVVEGGNLIKKHIKPNPQKPENKGGIIAREAPLHVSNVAHYNPVTKKADKVGFKYLESNGVSKKVRYYKSNNEIIDRI.

It belongs to the universal ribosomal protein uL24 family. In terms of assembly, part of the 50S ribosomal subunit.

In terms of biological role, one of two assembly initiator proteins, it binds directly to the 5'-end of the 23S rRNA, where it nucleates assembly of the 50S subunit. One of the proteins that surrounds the polypeptide exit tunnel on the outside of the subunit. This Legionella pneumophila (strain Paris) protein is Large ribosomal subunit protein uL24.